A 635-amino-acid chain; its full sequence is Threonine--tRNA ligase (635 aa).

The region spanning 1-61 (MINISFPDGS…EHDCKLRILT (61 aa)) is the TGS domain. Residues 242–533 (DHRKIGKELD…LIEEYAGKFP (292 aa)) form a catalytic region. Cysteine 333, histidine 384, and histidine 510 together coordinate Zn(2+).

Belongs to the class-II aminoacyl-tRNA synthetase family. As to quaternary structure, homodimer. It depends on Zn(2+) as a cofactor.

The protein resides in the cytoplasm. The catalysed reaction is tRNA(Thr) + L-threonine + ATP = L-threonyl-tRNA(Thr) + AMP + diphosphate + H(+). Its function is as follows. Catalyzes the attachment of threonine to tRNA(Thr) in a two-step reaction: L-threonine is first activated by ATP to form Thr-AMP and then transferred to the acceptor end of tRNA(Thr). Also edits incorrectly charged L-seryl-tRNA(Thr). The sequence is that of Threonine--tRNA ligase from Rickettsia typhi (strain ATCC VR-144 / Wilmington).